A 389-amino-acid chain; its full sequence is Succinate--CoA ligase [ADP-forming] subunit beta (389 aa).

In terms of domain architecture, ATP-grasp spans 9-236; that stretch reads KELFAKHEVP…KDATDPLELK (228 aa). Residues Lys-45, 52 to 54, Ser-94, and Glu-99 each bind ATP; that span reads GRG. Residues Asn-191 and Asp-205 each contribute to the Mg(2+) site. Residues Asn-256 and 318–320 each bind substrate; that span reads GIT.

This sequence belongs to the succinate/malate CoA ligase beta subunit family. Heterotetramer of two alpha and two beta subunits. Requires Mg(2+) as cofactor.

The enzyme catalyses succinate + ATP + CoA = succinyl-CoA + ADP + phosphate. It catalyses the reaction GTP + succinate + CoA = succinyl-CoA + GDP + phosphate. Its pathway is carbohydrate metabolism; tricarboxylic acid cycle; succinate from succinyl-CoA (ligase route): step 1/1. In terms of biological role, succinyl-CoA synthetase functions in the citric acid cycle (TCA), coupling the hydrolysis of succinyl-CoA to the synthesis of either ATP or GTP and thus represents the only step of substrate-level phosphorylation in the TCA. The beta subunit provides nucleotide specificity of the enzyme and binds the substrate succinate, while the binding sites for coenzyme A and phosphate are found in the alpha subunit. The sequence is that of Succinate--CoA ligase [ADP-forming] subunit beta from Rhodococcus opacus (strain B4).